The chain runs to 426 residues: Glutamyl-tRNA reductase (426 aa).

Substrate contacts are provided by residues 49–52 (TCNR), Ser-109, 114–116 (EGQ), and Gln-120. Cys-50 acts as the Nucleophile in catalysis. NADP(+) is bound at residue 189–194 (GAGETG).

The protein belongs to the glutamyl-tRNA reductase family. As to quaternary structure, homodimer.

It carries out the reaction (S)-4-amino-5-oxopentanoate + tRNA(Glu) + NADP(+) = L-glutamyl-tRNA(Glu) + NADPH + H(+). It participates in porphyrin-containing compound metabolism; protoporphyrin-IX biosynthesis; 5-aminolevulinate from L-glutamyl-tRNA(Glu): step 1/2. Functionally, catalyzes the NADPH-dependent reduction of glutamyl-tRNA(Glu) to glutamate 1-semialdehyde (GSA). This Chlorobaculum parvum (strain DSM 263 / NCIMB 8327) (Chlorobium vibrioforme subsp. thiosulfatophilum) protein is Glutamyl-tRNA reductase (hemA).